Here is an 823-residue protein sequence, read N- to C-terminus: Ankyrin repeat domain-containing protein 20A1 (823 aa).

ANK repeat units lie at residues 66–95 (QHRT…QIDV), 99–128 (ENRT…NPNL), 132–161 (YGNT…HIEA), 165–194 (DNNT…SSHA), and 198–227 (LRRS…DVFA). Disordered stretches follow at residues 301 to 343 (VPEK…EVED) and 355 to 402 (VQTL…LSEN). A compositionally biased stretch (basic and acidic residues) spans 372-384 (QERHERSEKKQPQ). 3 coiled-coil regions span residues 431–480 (KKLK…KQLE), 565–724 (EMIT…NNST), and 776–805 (LVLE…EKTE).

In Homo sapiens (Human), this protein is Ankyrin repeat domain-containing protein 20A1 (ANKRD20A1).